A 335-amino-acid chain; its full sequence is GTPase Obg (335 aa).

The Obg domain occupies 1 to 159; sequence MKFVDSAKIS…IELEMELKLM (159 aa). In terms of domain architecture, OBG-type G spans 160–323; sequence ADVGLVGFPN…LKDELWRQIS (164 aa). GTP contacts are provided by residues 166 to 173, 191 to 195, 213 to 216, 280 to 283, and 304 to 306; these read GFPNAGKS, FTTLV, DIPG, TKMD, and SSV. Residues S173 and T193 each coordinate Mg(2+).

Belongs to the TRAFAC class OBG-HflX-like GTPase superfamily. OBG GTPase family. As to quaternary structure, monomer. Mg(2+) serves as cofactor.

It is found in the cytoplasm. Functionally, an essential GTPase which binds GTP, GDP and possibly (p)ppGpp with moderate affinity, with high nucleotide exchange rates and a fairly low GTP hydrolysis rate. Plays a role in control of the cell cycle, stress response, ribosome biogenesis and in those bacteria that undergo differentiation, in morphogenesis control. This is GTPase Obg from Chlorobaculum parvum (strain DSM 263 / NCIMB 8327) (Chlorobium vibrioforme subsp. thiosulfatophilum).